The sequence spans 304 residues: Ribosomal RNA small subunit methyltransferase H (304 aa).

S-adenosyl-L-methionine is bound by residues 37–39 (GGH), D57, F79, D100, and H107.

Belongs to the methyltransferase superfamily. RsmH family.

The protein localises to the cytoplasm. The enzyme catalyses cytidine(1402) in 16S rRNA + S-adenosyl-L-methionine = N(4)-methylcytidine(1402) in 16S rRNA + S-adenosyl-L-homocysteine + H(+). Its function is as follows. Specifically methylates the N4 position of cytidine in position 1402 (C1402) of 16S rRNA. The protein is Ribosomal RNA small subunit methyltransferase H of Bacteroides fragilis (strain YCH46).